Here is a 187-residue protein sequence, read N- to C-terminus: Large ribosomal subunit protein bL9 (187 aa).

A disordered region spans residues 155–187 (AQRGGMVTGLREEDEEEEVEETATEEGGEETAA). Over residues 166-187 (EEDEEEEVEETATEEGGEETAA) the composition is skewed to acidic residues.

Belongs to the bacterial ribosomal protein bL9 family.

In terms of biological role, binds to the 23S rRNA. This is Large ribosomal subunit protein bL9 from Rhodospirillum centenum (strain ATCC 51521 / SW).